Consider the following 428-residue polypeptide: Spliceosome RNA helicase Ddx39b (428 aa).

Residues 1 to 19 are compositionally biased toward acidic residues; that stretch reads MAENDVDNELLDYEDDEVE. Residues 1-31 form a disordered region; that stretch reads MAENDVDNELLDYEDDEVETAAGADGTEAPA. An N-acetylalanine modification is found at Ala2. Lys36 is subject to N6-acetyllysine; alternate. A Glycyl lysine isopeptide (Lys-Gly) (interchain with G-Cter in SUMO2); alternate cross-link involves residue Lys36. Residues Ser38 and Ser41 each carry the phosphoserine modification. Residues 45–73 carry the Q motif motif; that stretch reads SGFRDFLLKPELLRAIVDCGFEHPSEVQH. A Helicase ATP-binding domain is found at 76-249; it reads IPQAILGMDV…RKFMQDPMEI (174 aa). Residue 89-96 coordinates ATP; the sequence is AKSGMGKT. Thr172 is modified (phosphothreonine). The DECD box motif lies at 196–199; that stretch reads DECD. The Helicase C-terminal domain occupies 261-422; the sequence is GLQQYYVKLK…ELPDEIDISS (162 aa).

It belongs to the DEAD box helicase family. DECD subfamily. Homodimer, and heterodimer with DDX39A. DDX39B interacts with the THO subcomplex to form the THO-DDX39B complex which multimerizes into a 28-subunit tetrameric assembly. Component of the transcription/export (TREX) complex at least composed of ALYREF/THOC4, DDX39B, SARNP/CIP29, CHTOP and the THO subcomplex; in the complex interacts with THOC2. THOC1-THOC2-THOC3-DDX39B subcomplex is sufficient for the interaction with export factor NXF1-NXT1. TREX seems to have a dynamic structure involving ATP-dependent remodeling. Within the TREX complex bridges ALYREF/THOC4 and the THO subcomplex, and, in a ATP-dependent manner, ALYREF/THOC4 and SARNP/CIP29. Component of the spliceosome. Interacts directly with U2AF2. Interacts with RBM8A, RNPS1 and SRRM1, FYTTD1/UIF, THOC1, MX1 and POLDIP3. Interacts with LUZP4. Interacts with SARNP/CIP29 (via the C-terminal domain); the interaction is direct and facilitates RNA binding of DDX39B.

The protein resides in the nucleus. It localises to the nucleus speckle. The protein localises to the cytoplasm. The catalysed reaction is ATP + H2O = ADP + phosphate + H(+). Its function is as follows. Involved in nuclear export of spliced and unspliced mRNA. Component of the TREX complex which is thought to couple mRNA transcription, processing and nuclear export, and specifically associates with spliced mRNA and not with unspliced pre-mRNA. The TREX complex is recruited to spliced mRNAs by a transcription-independent mechanism, binds to mRNA upstream of the exon-junction complex (EJC) and is recruited in a splicing- and cap-dependent manner to a region near the 5' end of the mRNA where it functions in mRNA export to the cytoplasm via the TAP/NXF1 pathway. The THOC1-THOC2-THOC3 core complex alone is sufficient to promote ATPase activity of DDX39B; in the complex THOC2 is the only component that directly interacts with DDX39B. Associates with SARNP/CIP29, which facilitates RNA binding of DDX39B and likely plays a role in mRNA export. May undergo several rounds of ATP hydrolysis during assembly of TREX to drive subsequent loading of components such as ALYREF/THOC4 and CHTOP onto mRNA. Also associates with pre-mRNA independent of ALYREF/THOC4. Involved in the nuclear export of intronless mRNA; the ATP-bound form is proposed to recruit export adapter ALYREF/THOC4 to intronless mRNA; its ATPase activity is cooperatively stimulated by RNA and ALYREF/THOC4 and ATP hydrolysis is thought to trigger the dissociation from RNA to allow the association of ALYREF/THOC4 and the NXF1-NXT1 heterodimer. Involved in transcription elongation and genome stability. In terms of biological role, splice factor that is required for the first ATP-dependent step in spliceosome assembly and for the interaction of U2 snRNP with the branchpoint. Has both RNA-stimulated ATP binding/hydrolysis activity and ATP-dependent RNA unwinding activity. Even with the stimulation of RNA, the ATPase activity is weak. Can only hydrolyze ATP but not other NTPs. The RNA stimulation of ATPase activity does not have a strong preference for the sequence and length of the RNA. However, ssRNA stimulates the ATPase activity much more strongly than dsRNA. Can unwind 5' or 3' overhangs or blunt end RNA duplexes in vitro. The ATPase and helicase activities are not influenced by U2AF2; the effect of ALYREF/THOC4 is reported conflictingly. The chain is Spliceosome RNA helicase Ddx39b (Ddx39b) from Mus musculus (Mouse).